A 368-amino-acid chain; its full sequence is Protein-glutamate methylesterase/protein-glutamine glutaminase (368 aa).

Residues arginine 9–glutamate 126 enclose the Response regulatory domain. 4-aspartylphosphate is present on aspartate 60. Residues serine 161 to isoleucine 354 enclose the CheB-type methylesterase domain. Catalysis depends on residues serine 173, histidine 200, and aspartate 296.

It belongs to the CheB family. In terms of processing, phosphorylated by CheA. Phosphorylation of the N-terminal regulatory domain activates the methylesterase activity.

Its subcellular location is the cytoplasm. It carries out the reaction [protein]-L-glutamate 5-O-methyl ester + H2O = L-glutamyl-[protein] + methanol + H(+). It catalyses the reaction L-glutaminyl-[protein] + H2O = L-glutamyl-[protein] + NH4(+). Its function is as follows. Involved in chemotaxis. Part of a chemotaxis signal transduction system that modulates chemotaxis in response to various stimuli. Catalyzes the demethylation of specific methylglutamate residues introduced into the chemoreceptors (methyl-accepting chemotaxis proteins or MCP) by CheR. Also mediates the irreversible deamidation of specific glutamine residues to glutamic acid. The polypeptide is Protein-glutamate methylesterase/protein-glutamine glutaminase (Pyrococcus abyssi (strain GE5 / Orsay)).